Here is a 1341-residue protein sequence, read N- to C-terminus: DNA-directed RNA polymerase subunit beta (1341 aa).

This sequence belongs to the RNA polymerase beta chain family. In terms of assembly, the RNAP catalytic core consists of 2 alpha, 1 beta, 1 beta' and 1 omega subunit. When a sigma factor is associated with the core the holoenzyme is formed, which can initiate transcription.

The enzyme catalyses RNA(n) + a ribonucleoside 5'-triphosphate = RNA(n+1) + diphosphate. In terms of biological role, DNA-dependent RNA polymerase catalyzes the transcription of DNA into RNA using the four ribonucleoside triphosphates as substrates. The polypeptide is DNA-directed RNA polymerase subunit beta (Vibrio cholerae serotype O1 (strain ATCC 39315 / El Tor Inaba N16961)).